The primary structure comprises 513 residues: Xylose import ATP-binding protein XylG (513 aa).

ABC transporter domains are found at residues 5–242 and 259–505; these read LEMK…VGRE and LRIE…LRSE. 37–44 is a binding site for ATP; sequence GENGSGKS.

The protein belongs to the ABC transporter superfamily. Xylose importer (TC 3.A.1.2.4) family. In terms of assembly, the complex is composed of two ATP-binding proteins (XylG), two transmembrane proteins (XylH) and a solute-binding protein (XylF).

Its subcellular location is the cell inner membrane. It catalyses the reaction D-xylose(out) + ATP + H2O = D-xylose(in) + ADP + phosphate + H(+). In terms of biological role, part of the ABC transporter complex XylFGH involved in xylose import. Responsible for energy coupling to the transport system. The chain is Xylose import ATP-binding protein XylG from Shigella boydii serotype 4 (strain Sb227).